The chain runs to 300 residues: Diphthine methyl ester synthase (300 aa).

Residues leucine 9, aspartate 85, glycine 88, 113-114 (SV), and leucine 164 contribute to the S-adenosyl-L-methionine site. Serine 172 carries the phosphoserine modification. S-adenosyl-L-methionine is bound by residues leucine 222 and histidine 247. Serine 298 carries the phosphoserine modification.

This sequence belongs to the diphthine synthase family.

The protein resides in the cytoplasm. It catalyses the reaction 2-[(3S)-amino-3-carboxypropyl]-L-histidyl-[translation elongation factor 2] + 4 S-adenosyl-L-methionine = diphthine methyl ester-[translation elongation factor 2] + 4 S-adenosyl-L-homocysteine + 3 H(+). Its pathway is protein modification; peptidyl-diphthamide biosynthesis. Its function is as follows. S-adenosyl-L-methionine-dependent methyltransferase that catalyzes four methylations of the modified target histidine residue in translation elongation factor 2 (EF-2), to form an intermediate called diphthine methyl ester. The four successive methylation reactions represent the second step of diphthamide biosynthesis. The polypeptide is Diphthine methyl ester synthase (DPH5) (Saccharomyces cerevisiae (strain ATCC 204508 / S288c) (Baker's yeast)).